A 379-amino-acid polypeptide reads, in one-letter code: Succinyl-diaminopimelate desuccinylase (379 aa).

A Zn(2+)-binding site is contributed by H70. D72 is a catalytic residue. D103 contacts Zn(2+). The active-site Proton acceptor is the E137. Zn(2+) contacts are provided by E138, E166, and H352.

Belongs to the peptidase M20A family. DapE subfamily. Homodimer. Zn(2+) serves as cofactor. Requires Co(2+) as cofactor.

The catalysed reaction is N-succinyl-(2S,6S)-2,6-diaminopimelate + H2O = (2S,6S)-2,6-diaminopimelate + succinate. Its pathway is amino-acid biosynthesis; L-lysine biosynthesis via DAP pathway; LL-2,6-diaminopimelate from (S)-tetrahydrodipicolinate (succinylase route): step 3/3. Functionally, catalyzes the hydrolysis of N-succinyl-L,L-diaminopimelic acid (SDAP), forming succinate and LL-2,6-diaminopimelate (DAP), an intermediate involved in the bacterial biosynthesis of lysine and meso-diaminopimelic acid, an essential component of bacterial cell walls. This is Succinyl-diaminopimelate desuccinylase from Shewanella sp. (strain W3-18-1).